A 248-amino-acid polypeptide reads, in one-letter code: Protein canopy homolog 4 (248 aa).

A signal peptide spans 1–21 (MGPVRLGILLFLFLAVHEAWA). 3 disulfide bridges follow: Cys38-Cys196, Cys41-Cys184, and Cys94-Cys156. Residues 200–248 (TWTGKEITDGEEKTEGEEEQEEEEEEEEEEGGDKMTKTGSHPKLDREDL) are disordered. The span at 213 to 230 (TEGEEEQEEEEEEEEEEG) shows a compositional bias: acidic residues. Over residues 231-248 (GDKMTKTGSHPKLDREDL) the composition is skewed to basic and acidic residues.

Belongs to the canopy family. As to quaternary structure, interacts with TLR4.

It is found in the secreted. Plays a role in the regulation of the cell surface expression of TLR4. This chain is Protein canopy homolog 4 (CNPY4), found in Homo sapiens (Human).